Consider the following 403-residue polypeptide: MNRYRYESIFFRYISSTRMILIICLLLGIGDMSAMGLKKDNSPIIPTLHPKGNENLRATLNEYKIPSPLFDTLDNSYETKHVIYTDNCSFAVLNPFGDPKYTLLSLLLMGRRKYDALVAWFVLGRACGRPIYLREYANCSTNEPFGTCKLKSLGWWDRRYAMTSYIDRDELKLIIAAPSRELSGLYTRLIIINGEPISSDILLTVKETCSFSRRGIKDNKLCKPFSFFVNGTTRLLDMVGTGTPRAHEENVKQWLERIGGKHLPIVVETSMQQVSNLPRSFRDSYFKSPDDDKYDDVKMTSATTNNITTSVDGYTGLTNRPEDFEKAPYITKRPIISVEEASSQSPKISTEKKSRTQIIISLVVLCVMFCFIVIGSGIWILRKHRKTVMYDRRRPSRRAYSRL.

A signal peptide spans 1-34 (MNRYRYESIFFRYISSTRMILIICLLLGIGDMSA). At 35–357 (MGLKKDNSPI…ISTEKKSRTQ (323 aa)) the chain is on the virion surface side. N-linked (GlcNAc...) asparagine; by host glycosylation is found at asparagine 87 and asparagine 138. 3 disulfide bridges follow: cysteine 88–cysteine 209, cysteine 127–cysteine 222, and cysteine 139–cysteine 148. N-linked (GlcNAc...) asparagine; by host glycosylation is found at asparagine 230 and asparagine 306. A helical transmembrane segment spans residues 358–378 (IIISLVVLCVMFCFIVIGSGI). Over 379-403 (WILRKHRKTVMYDRRRPSRRAYSRL) the chain is Intravirion.

The protein belongs to the herpesviridae glycoprotein D family.

Its subcellular location is the virion membrane. Envelope glycoprotein that binds to host cell entry receptors, promoting the virus entry into host cells. May trigger fusion with host membrane, by recruiting the fusion machinery composed of gB and gH/gL. The sequence is that of Envelope glycoprotein D (MDV094) from Gallus gallus (Chicken).